We begin with the raw amino-acid sequence, 652 residues long: Forkhead box protein O1 (652 aa).

Disordered regions lie at residues 1–62 and 112–154; these read MAEA…ASAS and VHPA…SSRR. Position 24 is a phosphothreonine; by PKB/AKT1 or PKB/AKT2 and SGK1 (Thr-24). The span at 35–62 shows a compositional bias: low complexity; that stretch reads SNSTTSSPAPSGGAAANPDAAASLASAS. Pro residues predominate over residues 114 to 133; it reads PAPPQPPPTGPLSQPPPVPP. Positions 134–146 are enriched in low complexity; the sequence is SAAAAAGPLAGQP. The segment at residues 156 to 232 is a DNA-binding region (fork-head); the sequence is AWGNLSYADL…VQNEGTGKSS (77 aa). DNA-binding stretches follow at residues 208–215 and 231–234; these read NSIRHNLS and SSWW. A Phosphoserine; by STK4/MST1 modification is found at Ser-209. A phosphoserine mark is found at Ser-215, Ser-231, and Ser-232. Disordered stretches follow at residues 231-342 and 383-410; these read SSWW…DVHS and SLTVSTQSSPGSMMQQTPCYSFAPPNTS. Residues Lys-242 and Lys-245 each carry the N6-acetyllysine modification. Residue Ser-246 is modified to Phosphoserine; by CDK1. 2 positions are modified to omega-N-methylarginine; by PRMT1: Arg-248 and Arg-250. A Nuclear localization signal motif is present at residues 248-250; it reads RRR. A Phosphoserine; by PKB/AKT1 and SGK1 modification is found at Ser-253. Lys-259, Lys-262, and Lys-271 each carry N6-acetyllysine. Basic residues predominate over residues 261–272; that stretch reads AKSRGRAAKKKA. The segment at 280–562 is sufficient for interaction with NLK; that stretch reads GPGDSPGSQF…TPVKTPLQVP (283 aa). Phosphoserine is present on residues Ser-284 and Ser-295. Over residues 306-323 the composition is skewed to polar residues; it reads NWSTFRPRTSSNASTISG. Ser-316 carries the post-translational modification Phosphoserine; by PKB/AKT1 or PKB/AKT2. Phosphoserine; by CK1 and SGK1 is present on Ser-319. Ser-322 carries the post-translational modification Phosphoserine; by CK1. Ser-326 carries the phosphoserine modification. Position 330 is a phosphothreonine (Thr-330). The segment at 360–456 is required for interaction with RUNX2; the sequence is SEISNPENME…GGLNQYNCAP (97 aa). The segment covering 392–401 has biased composition (polar residues); the sequence is PGSMMQQTPC. The residue at position 420 (Lys-420) is an N6-acetyllysine. The Required for interaction with SIRT1 signature appears at 459 to 463; it reads LKELL.

Interacts with EP300 and CREBBP; the interactions acetylate FOXO1. Interacts with the 14-3-3 proteins, YWHAG and YWHAZ; the interactions require insulin-stimulated phosphorylation on Thr-24, promote nuclear exit and loss of transcriptional activity. Interacts with SKP2; the interaction ubiquitinates FOXO1 leading to its proteasomal degradation. Interacts with PMRT1; methylates FOXO1, prevents PKB/AKT1 phosphorylation and retains FOXO1 in the nucleus. Interacts (via an N-terminal domain) with FCOR; the interaction is direct, occurs in a forskolin-independent manner and prevents SIRT1 binding to FOXO1. Interacts (via the C-terminal half) with ATF4 (via its DNA-binding domain); the interaction occurs in osteoblasts, regulates glucose homeostasis via suppression of beta-cell proliferation and subsequent decrease in insulin production. Interacts with RUNX2; the interaction inhibits RUNX2 transcriptional activity and mediates the IGF1/insulin-dependent BGLAP expression in osteoblasts. Interacts with PPP2R1A; the interaction regulates the dephosphorylation of FOXO1 at Thr-24 and Ser-253 leading to its nuclear import. Binds to CDK1. Interacts with LRPPRC. Interacts with RUNX2; the interaction inhibits RUNX2 transcriptional activity and mediates the IGF1/insulin-dependent BGLAP expression in osteoblasts. Interacts with NLK. Interacts with SIRT1; the interaction results in the deacetylation of FOXO1 leading to activation of FOXO1-mediated transcription of genes involved in DNA repair and stress resistance. The interaction requires the presence of KRIT1 and is inhibited by FCOR. Interacts with SIRT2; the interaction is disrupted in response to oxidative stress or serum deprivation, leading to increased level of acetylated FOXO1, which promotes stress-induced autophagy by stimulating E1-like activating enzyme ATG7. Interacts (acetylated form) with ATG7; the interaction is increased in response to oxidative stress or serum deprivation and promotes the autophagic process leading to cell death. Interacts (acetylated form) with PPARG. Interacts with XBP1 isoform 2; this interaction is direct and leads to FOXO1 ubiquitination and degradation via the proteasome pathway. Interacts (via the Fork-head domain) with CEBPA; the interaction increases when FOXO1 is deacetylated. Interacts with WDFY2. Forms a complex with WDFY2 and AKT1. Interacts with CRY1. Interacts with PPIA/CYPA; the interaction promotes FOXO1 dephosphorylation, nuclear accumulation and transcriptional activity. Interacts with TOX4; FOXO1 is required for full induction of TOX4-dependent activity and the interaction is inhibited by insulin. Interacts (when phosphorylated on Ser-253) with STUB1/CHIP. Post-translationally, phosphorylation by NLK promotes nuclear export and inhibits the transcriptional activity. In response to growth factors, phosphorylation on Thr-24, Ser-253 and Ser-319 by PKB/AKT1 promotes nuclear export and inactivation of transactivational activity. Phosphorylation on Thr-24 is required for binding 14-3-3 proteins. Phosphorylation of Ser-253 decreases DNA-binding activity and promotes the phosphorylation of Thr-24 and Ser-316, permitting phosphorylation of Ser-319 and Ser-322, probably by CDK1, leading to nuclear exclusion and loss of function. Stress signals, such as response to oxygen or nitric oxide, attenuate the PKB/AKT1-mediated phosphorylation leading to nuclear retention. Phosphorylation of Ser-326 is independent of IGF1 and leads to reduced function. Dephosphorylated on Thr-24 and Ser-253 by PP2A in beta-cells under oxidative stress leading to nuclear retention. Phosphorylation of Ser-246 by CDK1 disrupts binding of 14-3-3 proteins leading to nuclear accumulation and has no effect on DNA-binding nor transcriptional activity. Phosphorylation by STK4/MST1 on Ser-209, upon oxidative stress, inhibits binding to 14-3-3 proteins and nuclear export. PPIA/CYPA promotes its dephosphorylation on Ser-253. Ubiquitinated by SKP2. Ubiquitinated, leading to proteasomal degradation. Ubiquitinated by STUB1/CHIP; when Ser-253 is phosphorylated. In terms of processing, methylation inhibits PKB/AKT1-mediated phosphorylation at Ser-253, promoting nuclear retention and increasing the transcriptional activity and cell death. Methylation increased by oxidative stress. Post-translationally, acetylation at Lys-259 and Lys-271 are necessary for autophagic cell death induction. Deacetylated by SIRT2 in response to oxidative stress or serum deprivation, thereby negatively regulating FOXO1-mediated autophagic cell death. Once in the nucleus, acetylated by CREBBP/EP300. Acetylation diminishes the interaction with target DNA and attenuates the transcriptional activity. It increases the phosphorylation at Ser-253, and is required for the transcriptional inhibition by FCOR. Deacetylation by SIRT1 results in reactivation of the transcriptional activity. Acetylation of FOXO1 diminishes its binding to PPARG in adipocytes. Deacetylated by SIRT2; deacetylation of FOXO1 directly increases its repressive binding to PPARG and inhibits adipocyte differentiation. Oxidative stress by hydrogen peroxide treatment appears to promote deacetylation and uncoupling of insulin-induced phosphorylation. By contrast, resveratrol acts independently of acetylation. Acetylated at Lys-420, promoting its localization to the nucleus and transcription factor activity. Deacetylation at Lys-420 by SIRT6, promotes its translocation into the cytoplasm, preventing its transcription factor activity. Deacetylation and subsequent inhibition by SIRT6 has different effects depending on cell types: it inhibits gluconeogenesis in hepatocytes, promotes glucose sensing in pancreatic beta-cells and regulates lipid catabolism in brown adipocytes. In terms of tissue distribution, expressed in liver, white and brown adipose tissues (at protein level).

Its subcellular location is the cytoplasm. It is found in the nucleus. In terms of biological role, transcription factor that is the main target of insulin signaling and regulates metabolic homeostasis in response to oxidative stress. Binds to the insulin response element (IRE) with consensus sequence 5'-TT[G/A]TTTTG-3' and the related Daf-16 family binding element (DBE) with consensus sequence 5'-TT[G/A]TTTAC-3'. Activity suppressed by insulin. Main regulator of redox balance and osteoblast numbers and controls bone mass. Orchestrates the endocrine function of the skeleton in regulating glucose metabolism. Also acts as a key regulator of chondrogenic commitment of skeletal progenitor cells in response to lipid availability: when lipids levels are low, translocates to the nucleus and promotes expression of SOX9, which induces chondrogenic commitment and suppresses fatty acid oxidation. Acts synergistically with ATF4 to suppress osteocalcin/BGLAP activity, increasing glucose levels and triggering glucose intolerance and insulin insensitivity. Also suppresses the transcriptional activity of RUNX2, an upstream activator of osteocalcin/BGLAP. Acts as an inhibitor of glucose sensing in pancreatic beta cells by acting as a transcription repressor and suppressing expression of PDX1. In hepatocytes, promotes gluconeogenesis by acting together with PPARGC1A and CEBPA to activate the expression of genes such as IGFBP1, G6PC1 and PCK1. Also promotes gluconeogenesis by directly promoting expression of PPARGC1A and G6PC1. Important regulator of cell death acting downstream of CDK1, PKB/AKT1 and STK4/MST1. Promotes neural cell death. Mediates insulin action on adipose tissue. Regulates the expression of adipogenic genes such as PPARG during preadipocyte differentiation and, adipocyte size and adipose tissue-specific gene expression in response to excessive calorie intake. Regulates the transcriptional activity of GADD45A and repair of nitric oxide-damaged DNA in beta-cells. Required for the autophagic cell death induction in response to starvation or oxidative stress in a transcription-independent manner. Mediates the function of MLIP in cardiomyocytes hypertrophy and cardiac remodeling. Positive regulator of apoptosis in cardiac smooth muscle cells as a result of its transcriptional activation of pro-apoptotic genes. Regulates endothelial cell (EC) viability and apoptosis in a PPIA/CYPA-dependent manner via transcription of CCL2 and BCL2L11 which are involved in EC chemotaxis and apoptosis. The polypeptide is Forkhead box protein O1 (Foxo1) (Mus musculus (Mouse)).